The sequence spans 825 residues: NT-3 growth factor receptor (825 aa).

The first 31 residues, 1–31 (MDVSLCPAKCSFWRIFLLGSVWLDYVGSVLA), serve as a signal peptide directing secretion. 2 disulfide bridges follow: cysteine 32-cysteine 38 and cysteine 36-cysteine 45. Residues 32–429 (CPANCVCSKT…TVTHKPEEDT (398 aa)) lie on the Extracellular side of the membrane. N-linked (GlcNAc...) asparagine glycans are attached at residues asparagine 68, asparagine 72, and asparagine 79. 2 LRR repeats span residues 104 to 125 (GLQK…AFAK) and 128 to 149 (HLRY…LFQT). N-linked (GlcNAc...) asparagine glycans are attached at residues asparagine 133 and asparagine 163. The 50-residue stretch at 160–209 (NFFNCSCDIRWMQLWQEQGEARLDSQSLYCISADGSQLPLFRMNISQCDL) folds into the LRRCT domain. Cystine bridges form between cysteine 164/cysteine 189 and cysteine 166/cysteine 207. 7 N-linked (GlcNAc...) asparagine glycosylation sites follow: asparagine 203, asparagine 218, asparagine 232, asparagine 259, asparagine 267, asparagine 272, and asparagine 294. Ig-like C2-type domains are found at residues 210-300 (PEIS…VALT) and 309-382 (SLVE…IAKN). The cysteines at positions 231 and 284 are disulfide-linked. Cysteines 320 and 362 form a disulfide. Asparagine 375 and asparagine 388 each carry an N-linked (GlcNAc...) asparagine glycan. Residues 430–453 (FGVSIAVGLAAFACVLLVVLFIMI) traverse the membrane as a helical segment. Topologically, residues 454-825 (NKYGRRSKFG…ATPIYLDILG (372 aa)) are cytoplasmic. Serine 493 carries the phosphoserine modification. A Phosphotyrosine modification is found at tyrosine 516. The 288-residue stretch at 538-825 (IVLKRELGEG…ATPIYLDILG (288 aa)) folds into the Protein kinase domain. Residues 544–552 (LGEGAFGKV) and lysine 572 each bind ATP. Residue aspartate 679 is the Proton acceptor of the active site. Residues tyrosine 705, tyrosine 709, and tyrosine 710 each carry the phosphotyrosine; by autocatalysis modification.

The protein belongs to the protein kinase superfamily. Tyr protein kinase family. Insulin receptor subfamily. In terms of assembly, exists in a dynamic equilibrium between monomeric (low affinity) and dimeric (high affinity) structures. Binds SH2B2. Interacts with SQSTM1 and KIDINS220. Interacts with PTPRS. Interacts with MAPK8IP3/JIP3. Post-translationally, ligand-mediated auto-phosphorylation. Isoform 2 expression is restricted to specific areas in adult brain. Isoform 3 transcripts are readily detected early during embryogenesis and are expressed predominantly in adult brain and gonads.

Its subcellular location is the membrane. The enzyme catalyses L-tyrosyl-[protein] + ATP = O-phospho-L-tyrosyl-[protein] + ADP + H(+). Its function is as follows. Receptor tyrosine kinase involved in nervous system and probably heart development. Upon binding of its ligand NTF3/neurotrophin-3, NTRK3 autophosphorylates and activates different signaling pathways, including the phosphatidylinositol 3-kinase/AKT and the MAPK pathways, that control cell survival and differentiation. The protein is NT-3 growth factor receptor (Ntrk3) of Mus musculus (Mouse).